A 147-amino-acid chain; its full sequence is Large ribosomal subunit protein uL13 (147 aa).

It belongs to the universal ribosomal protein uL13 family. Part of the 50S ribosomal subunit.

Its function is as follows. This protein is one of the early assembly proteins of the 50S ribosomal subunit, although it is not seen to bind rRNA by itself. It is important during the early stages of 50S assembly. This is Large ribosomal subunit protein uL13 from Corynebacterium glutamicum (strain R).